A 414-amino-acid chain; its full sequence is Serine hydroxymethyltransferase (414 aa).

Residues Leu118 and 122 to 124 each bind (6S)-5,6,7,8-tetrahydrofolate; that span reads GHL. An N6-(pyridoxal phosphate)lysine modification is found at Lys227. Residues Glu240 and 350 to 352 contribute to the (6S)-5,6,7,8-tetrahydrofolate site; that span reads SPF.

The protein belongs to the SHMT family. Homodimer. It depends on pyridoxal 5'-phosphate as a cofactor.

It localises to the cytoplasm. It carries out the reaction (6R)-5,10-methylene-5,6,7,8-tetrahydrofolate + glycine + H2O = (6S)-5,6,7,8-tetrahydrofolate + L-serine. It participates in one-carbon metabolism; tetrahydrofolate interconversion. Its pathway is amino-acid biosynthesis; glycine biosynthesis; glycine from L-serine: step 1/1. Its function is as follows. Catalyzes the reversible interconversion of serine and glycine with tetrahydrofolate (THF) serving as the one-carbon carrier. This reaction serves as the major source of one-carbon groups required for the biosynthesis of purines, thymidylate, methionine, and other important biomolecules. Also exhibits THF-independent aldolase activity toward beta-hydroxyamino acids, producing glycine and aldehydes, via a retro-aldol mechanism. This Bacillus thuringiensis (strain Al Hakam) protein is Serine hydroxymethyltransferase.